Consider the following 148-residue polypeptide: Dermatopontin (148 aa).

A disulfide bond links cysteine 14 and cysteine 40. Asparagine 44 carries N-linked (GlcNAc...) asparagine glycosylation. 2 disulfide bridges follow: cysteine 66–cysteine 93 and cysteine 103–cysteine 147.

The protein belongs to the dermatopontin family. In terms of processing, the terminal mannose residues of the polysaccharide are 3-O-methylated. No tyrosine sulfation was detected.

Its subcellular location is the secreted. It is found in the extracellular space. It localises to the extracellular matrix. Seems to mediate adhesion by cell surface integrin binding. This is Dermatopontin from Biomphalaria glabrata (Bloodfluke planorb).